Reading from the N-terminus, the 84-residue chain is Small ribosomal subunit protein uS17 (84 aa).

It belongs to the universal ribosomal protein uS17 family. Part of the 30S ribosomal subunit.

Its function is as follows. One of the primary rRNA binding proteins, it binds specifically to the 5'-end of 16S ribosomal RNA. This is Small ribosomal subunit protein uS17 from Alkaliphilus oremlandii (strain OhILAs) (Clostridium oremlandii (strain OhILAs)).